A 57-amino-acid polypeptide reads, in one-letter code: MAKAKGNREKIKLVSTAKTGHFYTTEKNKRNMPEKMEIKKFDPVIRQHVIYKEAKIK.

This sequence belongs to the bacterial ribosomal protein bL33 family.

The sequence is that of Large ribosomal subunit protein bL33 from Shewanella sp. (strain MR-4).